The primary structure comprises 542 residues: Putative inactive cadmium/zinc-transporting ATPase HMA3 (542 aa).

The Cytoplasmic portion of the chain corresponds to M1–K89. Residues Q13–S79 form the HMA domain. Residues S90 to Y111 form a helical membrane-spanning segment. Residues F112–S114 are Extracellular-facing. A helical membrane pass occupies residues P115 to K134. Topologically, residues A135–R141 are cytoplasmic. The helical transmembrane segment at F142–D162 threads the bilayer. A topological domain (extracellular) is located at residue F163. The chain crosses the membrane as a helical span at residues T164–A184. Topologically, residues H185–K310 are cytoplasmic. A helical membrane pass occupies residues C311–L333. Over K334–W341 the chain is Extracellular. The chain crosses the membrane as a helical span at residues F342 to L359. Over S360–S542 the chain is Cytoplasmic.

This sequence belongs to the cation transport ATPase (P-type) (TC 3.A.3) family. Type IB subfamily.

Its subcellular location is the membrane. The polypeptide is Putative inactive cadmium/zinc-transporting ATPase HMA3 (HMA3) (Arabidopsis thaliana (Mouse-ear cress)).